Consider the following 323-residue polypeptide: tRNA U34 carboxymethyltransferase (323 aa).

Residues Lys-91, Trp-105, Lys-110, Gly-130, 152 to 154 (DPS), 181 to 182 (IE), Met-196, Tyr-200, and Arg-315 each bind carboxy-S-adenosyl-L-methionine.

This sequence belongs to the class I-like SAM-binding methyltransferase superfamily. CmoB family. As to quaternary structure, homotetramer.

The catalysed reaction is carboxy-S-adenosyl-L-methionine + 5-hydroxyuridine(34) in tRNA = 5-carboxymethoxyuridine(34) in tRNA + S-adenosyl-L-homocysteine + H(+). In terms of biological role, catalyzes carboxymethyl transfer from carboxy-S-adenosyl-L-methionine (Cx-SAM) to 5-hydroxyuridine (ho5U) to form 5-carboxymethoxyuridine (cmo5U) at position 34 in tRNAs. This Vibrio campbellii (strain ATCC BAA-1116) protein is tRNA U34 carboxymethyltransferase.